A 216-amino-acid chain; its full sequence is Probable GTP-binding protein EngB (216 aa).

Positions 27–201 (EGIEVAFAGR…REKLDTWFSE (175 aa)) constitute an EngB-type G domain. GTP contacts are provided by residues 35 to 42 (GRSNAGKS), 62 to 66 (GRTQL), 80 to 83 (DLPG), 147 to 150 (TKAD), and 180 to 182 (FSS). Mg(2+)-binding residues include serine 42 and threonine 64.

Belongs to the TRAFAC class TrmE-Era-EngA-EngB-Septin-like GTPase superfamily. EngB GTPase family. Requires Mg(2+) as cofactor.

Functionally, necessary for normal cell division and for the maintenance of normal septation. This chain is Probable GTP-binding protein EngB, found in Yersinia pestis bv. Antiqua (strain Angola).